Here is a 62-residue protein sequence, read N- to C-terminus: Short neurotoxin A (62 aa).

Polar residues predominate over residues 1-16 (RRCFNHPSSQPQTNKS). A disordered region spans residues 1-21 (RRCFNHPSSQPQTNKSCPPGE). 4 disulfide bridges follow: Cys3-Cys24, Cys17-Cys41, Cys43-Cys54, and Cys55-Cys60.

Belongs to the three-finger toxin family. Short-chain subfamily. Type I alpha-neurotoxin sub-subfamily. As to expression, expressed by the venom gland.

The protein localises to the secreted. In terms of biological role, binds to muscle nicotinic acetylcholine receptor (nAChR) and inhibit acetylcholine from binding to the receptor, thereby impairing neuromuscular transmission. The polypeptide is Short neurotoxin A (Laticauda crockeri (Crocker's sea snake)).